The primary structure comprises 21 residues: MYIFITHFFTEYVILKYLLPI.

This is an uncharacterized protein from Escherichia coli (strain K12).